A 201-amino-acid chain; its full sequence is Recombination protein RecR (201 aa).

A C4-type zinc finger spans residues 57-72; the sequence is CADCRTFTEQEVCNIC. The Toprim domain maps to 81-176; that stretch reads GQICVVESPA…EASRIAHGVP (96 aa).

Belongs to the RecR family.

In terms of biological role, may play a role in DNA repair. It seems to be involved in an RecBC-independent recombinational process of DNA repair. It may act with RecF and RecO. This Shigella boydii serotype 4 (strain Sb227) protein is Recombination protein RecR.